A 284-amino-acid polypeptide reads, in one-letter code: 4-diphosphocytidyl-2-C-methyl-D-erythritol kinase (284 aa).

Residue Lys13 is part of the active site. Pro96–Ser106 contacts ATP. Asp138 is an active-site residue.

The protein belongs to the GHMP kinase family. IspE subfamily.

It carries out the reaction 4-CDP-2-C-methyl-D-erythritol + ATP = 4-CDP-2-C-methyl-D-erythritol 2-phosphate + ADP + H(+). The protein operates within isoprenoid biosynthesis; isopentenyl diphosphate biosynthesis via DXP pathway; isopentenyl diphosphate from 1-deoxy-D-xylulose 5-phosphate: step 3/6. In terms of biological role, catalyzes the phosphorylation of the position 2 hydroxy group of 4-diphosphocytidyl-2C-methyl-D-erythritol. The protein is 4-diphosphocytidyl-2-C-methyl-D-erythritol kinase of Chromobacterium violaceum (strain ATCC 12472 / DSM 30191 / JCM 1249 / CCUG 213 / NBRC 12614 / NCIMB 9131 / NCTC 9757 / MK).